A 216-amino-acid polypeptide reads, in one-letter code: Ribonuclease HII (216 aa).

The 189-residue stretch at 28-216 folds into the RNase H type-2 domain; the sequence is DIVCGVDEAG…PVRAALDLIR (189 aa). Residues D34, E35, and D126 each coordinate a divalent metal cation.

It belongs to the RNase HII family. The cofactor is Mn(2+). Mg(2+) serves as cofactor.

It localises to the cytoplasm. It carries out the reaction Endonucleolytic cleavage to 5'-phosphomonoester.. Its function is as follows. Endonuclease that specifically degrades the RNA of RNA-DNA hybrids. This chain is Ribonuclease HII, found in Burkholderia vietnamiensis (strain G4 / LMG 22486) (Burkholderia cepacia (strain R1808)).